Here is a 400-residue protein sequence, read N- to C-terminus: Tyrosine--tRNA ligase (400 aa).

Positions 42–51 (PTAPDLHLGH) match the 'HIGH' region motif. A 'KMSKS' region motif is present at residues 226-230 (KMSKS). K229 contributes to the ATP binding site. The 61-residue stretch at 339–399 (FSISYILRRA…GKKKIAQIFV (61 aa)) folds into the S4 RNA-binding domain.

Belongs to the class-I aminoacyl-tRNA synthetase family. TyrS type 2 subfamily. Homodimer.

Its subcellular location is the cytoplasm. It carries out the reaction tRNA(Tyr) + L-tyrosine + ATP = L-tyrosyl-tRNA(Tyr) + AMP + diphosphate + H(+). Functionally, catalyzes the attachment of tyrosine to tRNA(Tyr) in a two-step reaction: tyrosine is first activated by ATP to form Tyr-AMP and then transferred to the acceptor end of tRNA(Tyr). The sequence is that of Tyrosine--tRNA ligase from Hahella chejuensis (strain KCTC 2396).